A 215-amino-acid chain; its full sequence is Large ribosomal subunit protein bL25 (215 aa).

Residues 170–215 form a disordered region; that stretch reads DPDTSVASVTPPTTEEDLDTDDVDENAEPELVGAENDSADEESENK. 2 stretches are compositionally biased toward acidic residues: residues 183-197 and 206-215; these read TEED…ENAE and DSADEESENK.

This sequence belongs to the bacterial ribosomal protein bL25 family. CTC subfamily. Part of the 50S ribosomal subunit; part of the 5S rRNA/L5/L18/L25 subcomplex. Contacts the 5S rRNA. Binds to the 5S rRNA independently of L5 and L18.

In terms of biological role, this is one of the proteins that binds to the 5S RNA in the ribosome where it forms part of the central protuberance. This chain is Large ribosomal subunit protein bL25, found in Oceanobacillus iheyensis (strain DSM 14371 / CIP 107618 / JCM 11309 / KCTC 3954 / HTE831).